The primary structure comprises 194 residues: Leucyl/phenylalanyl-tRNA--protein transferase (194 aa).

The protein belongs to the L/F-transferase family.

Its subcellular location is the cytoplasm. It catalyses the reaction N-terminal L-lysyl-[protein] + L-leucyl-tRNA(Leu) = N-terminal L-leucyl-L-lysyl-[protein] + tRNA(Leu) + H(+). The enzyme catalyses N-terminal L-arginyl-[protein] + L-leucyl-tRNA(Leu) = N-terminal L-leucyl-L-arginyl-[protein] + tRNA(Leu) + H(+). It carries out the reaction L-phenylalanyl-tRNA(Phe) + an N-terminal L-alpha-aminoacyl-[protein] = an N-terminal L-phenylalanyl-L-alpha-aminoacyl-[protein] + tRNA(Phe). In terms of biological role, functions in the N-end rule pathway of protein degradation where it conjugates Leu, Phe and, less efficiently, Met from aminoacyl-tRNAs to the N-termini of proteins containing an N-terminal arginine or lysine. This is Leucyl/phenylalanyl-tRNA--protein transferase from Prosthecochloris aestuarii (strain DSM 271 / SK 413).